Here is an 875-residue protein sequence, read N- to C-terminus: Phosphoenolpyruvate carboxylase (875 aa).

Residues H137 and K542 contribute to the active site.

Belongs to the PEPCase type 1 family. Requires Mg(2+) as cofactor.

The enzyme catalyses oxaloacetate + phosphate = phosphoenolpyruvate + hydrogencarbonate. Forms oxaloacetate, a four-carbon dicarboxylic acid source for the tricarboxylic acid cycle. The chain is Phosphoenolpyruvate carboxylase from Pseudomonas putida (strain GB-1).